The following is a 376-amino-acid chain: MVKKQNCVAMLLAGGKGSRLSALTKNLAKPAVPFGGKYRIIDFTLSNCSNSGIETVGILTQYQPLELHNYIGIGNAWDLDRVNGGVTVLPPYAEASGVKWYTGTASAIYQNMNFLRQYNPEYVLILSGDHIYKMDYSKMLDYHIAKEADVSISVIEVPWDEASRFGIMNTNEEMEIVEFEEKPQFPKSNLASMGIYIFNWAILKEYLEMDARNPDSSNDFGKDVLPLLLDEGKKLIAYPFQGYWKDVGTVKSLWEANMDLLRDESLLQLNDHEWRVYSVNPNEPPQFISETAKVEESLINEGCIIEGEVRHSVLFQGVTVDEGSKVIDSVVMPGAHIGKNVVIEKAIVGPGMVIEDGEVIRSEKNTDDVVLIAEGI.

Residues Tyr-101, Gly-166, 181–182, and Ser-192 each bind alpha-D-glucose 1-phosphate; that span reads EK.

The protein belongs to the bacterial/plant glucose-1-phosphate adenylyltransferase family. In terms of assembly, homotetramer.

It carries out the reaction alpha-D-glucose 1-phosphate + ATP + H(+) = ADP-alpha-D-glucose + diphosphate. It functions in the pathway glycan biosynthesis; glycogen biosynthesis. In terms of biological role, involved in the biosynthesis of ADP-glucose, a building block required for the elongation reactions to produce glycogen. Catalyzes the reaction between ATP and alpha-D-glucose 1-phosphate (G1P) to produce pyrophosphate and ADP-Glc. In Bacillus cytotoxicus (strain DSM 22905 / CIP 110041 / 391-98 / NVH 391-98), this protein is Glucose-1-phosphate adenylyltransferase.